The sequence spans 360 residues: Photosystem II protein D1 (360 aa).

The next 3 membrane-spanning stretches (helical) occupy residues 29-46 (YVGWFGTLMIPTLLTATT), 118-133 (QFLIGIFCYMGRQWEL), and 142-156 (WICVAYSAPVSARTA). Y126 contacts pheophytin a. D170 and E189 together coordinate [CaMn4O5] cluster. A helical membrane pass occupies residues 197–218 (FHMLGVAGVFGGSLFSAMHGSL). A chlorophyll a-binding site is contributed by H198. Residues H215 and 264-265 (SF) contribute to the a quinone site. Residue H215 participates in Fe cation binding. Position 272 (H272) interacts with Fe cation. Residues 274-288 (FLGAWPVIGIWFTAM) traverse the membrane as a helical segment. [CaMn4O5] cluster-binding residues include H332, E333, D342, and A344. Residues 345 to 360 (SGEQAPVALTAPAING) constitute a propeptide that is removed on maturation.

The protein belongs to the reaction center PufL/M/PsbA/D family. PSII is composed of 1 copy each of membrane proteins PsbA, PsbB, PsbC, PsbD, PsbE, PsbF, PsbH, PsbI, PsbJ, PsbK, PsbL, PsbM, PsbT, PsbX, PsbY, PsbZ, Psb30/Ycf12, peripheral proteins PsbO, CyanoQ (PsbQ), PsbU, PsbV and a large number of cofactors. It forms dimeric complexes. Requires The D1/D2 heterodimer binds P680, chlorophylls that are the primary electron donor of PSII, and subsequent electron acceptors. It shares a non-heme iron and each subunit binds pheophytin, quinone, additional chlorophylls, carotenoids and lipids. D1 provides most of the ligands for the Mn4-Ca-O5 cluster of the oxygen-evolving complex (OEC). There is also a Cl(-1) ion associated with D1 and D2, which is required for oxygen evolution. The PSII complex binds additional chlorophylls, carotenoids and specific lipids. as cofactor. In terms of processing, tyr-161 forms a radical intermediate that is referred to as redox-active TyrZ, YZ or Y-Z. Post-translationally, C-terminally processed by CtpA; processing is essential to allow assembly of the oxygen-evolving complex and thus photosynthetic growth.

The protein localises to the cellular thylakoid membrane. The catalysed reaction is 2 a plastoquinone + 4 hnu + 2 H2O = 2 a plastoquinol + O2. Photosystem II (PSII) is a light-driven water:plastoquinone oxidoreductase that uses light energy to abstract electrons from H(2)O, generating O(2) and a proton gradient subsequently used for ATP formation. It consists of a core antenna complex that captures photons, and an electron transfer chain that converts photonic excitation into a charge separation. The D1/D2 (PsbA/PsbD) reaction center heterodimer binds P680, the primary electron donor of PSII as well as several subsequent electron acceptors. The polypeptide is Photosystem II protein D1 (Synechocystis sp. (strain PCC 6714) (Aphanocapsa sp. (strain PCC 6714))).